The primary structure comprises 130 residues: Small ribosomal subunit protein uS11 (130 aa).

This sequence belongs to the universal ribosomal protein uS11 family. As to quaternary structure, part of the 30S ribosomal subunit. Interacts with proteins S7 and S18. Binds to IF-3.

Located on the platform of the 30S subunit, it bridges several disparate RNA helices of the 16S rRNA. Forms part of the Shine-Dalgarno cleft in the 70S ribosome. The polypeptide is Small ribosomal subunit protein uS11 (Shewanella sediminis (strain HAW-EB3)).